A 657-amino-acid polypeptide reads, in one-letter code: Threonine--tRNA ligase (657 aa).

The TGS domain occupies 7–70 (SQTQVTVTLP…SEDASIEIVT (64 aa)). Residues 253 to 555 (DHRKLGAELE…LIEHTGGNFP (303 aa)) form a catalytic region. Residues Cys-351, His-402, and His-532 each coordinate Zn(2+).

Belongs to the class-II aminoacyl-tRNA synthetase family. As to quaternary structure, homodimer. Zn(2+) is required as a cofactor.

The protein localises to the cytoplasm. The enzyme catalyses tRNA(Thr) + L-threonine + ATP = L-threonyl-tRNA(Thr) + AMP + diphosphate + H(+). In terms of biological role, catalyzes the attachment of threonine to tRNA(Thr) in a two-step reaction: L-threonine is first activated by ATP to form Thr-AMP and then transferred to the acceptor end of tRNA(Thr). Also edits incorrectly charged L-seryl-tRNA(Thr). The polypeptide is Threonine--tRNA ligase (Prosthecochloris aestuarii (strain DSM 271 / SK 413)).